Reading from the N-terminus, the 490-residue chain is Probable cytosol aminopeptidase (490 aa).

The Mn(2+) site is built by Lys256 and Asp261. The active site involves Lys268. Mn(2+) is bound by residues Asp280, Asp340, and Glu342. The active site involves Arg344.

Belongs to the peptidase M17 family. The cofactor is Mn(2+).

It is found in the cytoplasm. It catalyses the reaction Release of an N-terminal amino acid, Xaa-|-Yaa-, in which Xaa is preferably Leu, but may be other amino acids including Pro although not Arg or Lys, and Yaa may be Pro. Amino acid amides and methyl esters are also readily hydrolyzed, but rates on arylamides are exceedingly low.. The catalysed reaction is Release of an N-terminal amino acid, preferentially leucine, but not glutamic or aspartic acids.. In terms of biological role, presumably involved in the processing and regular turnover of intracellular proteins. Catalyzes the removal of unsubstituted N-terminal amino acids from various peptides. This chain is Probable cytosol aminopeptidase, found in Prochlorococcus marinus (strain MIT 9313).